Reading from the N-terminus, the 147-residue chain is Hemoglobin subunit beta (147 aa).

N-acetylvaline is present on Val2. The Globin domain occupies 3-147 (HLSAEEKGLV…VATALAHKYH (145 aa)). Position 13 is a phosphothreonine (Thr13). Ser45 bears the Phosphoserine mark. Lys60 carries the N6-acetyllysine modification. His64 contributes to the heme b binding site. An N6-acetyllysine modification is found at Lys83. His93 serves as a coordination point for heme b. Position 94 is an S-nitrosocysteine (Cys94). Lys145 carries the post-translational modification N6-acetyllysine.

This sequence belongs to the globin family. In terms of assembly, heterotetramer of two alpha chains and two beta chains. As to expression, red blood cells.

Its function is as follows. Involved in oxygen transport from the lung to the various peripheral tissues. The sequence is that of Hemoglobin subunit beta (HBB) from Scapanus orarius (Coast mole).